The sequence spans 248 residues: tRNA pseudouridine synthase A (248 aa).

Asp53 functions as the Nucleophile in the catalytic mechanism. A substrate-binding site is contributed by Tyr111.

This sequence belongs to the tRNA pseudouridine synthase TruA family. As to quaternary structure, homodimer.

It carries out the reaction uridine(38/39/40) in tRNA = pseudouridine(38/39/40) in tRNA. In terms of biological role, formation of pseudouridine at positions 38, 39 and 40 in the anticodon stem and loop of transfer RNAs. This is tRNA pseudouridine synthase A from Streptococcus thermophilus (strain ATCC BAA-491 / LMD-9).